The chain runs to 390 residues: Scoulerine-9-O-methyltransferase 1 (390 aa).

E153 contacts substrate. S-adenosyl-L-methionine contacts are provided by residues M207, S211, G235, D258, D278–M279, and K292. The Proton acceptor role is filled by H296. H296–D297 provides a ligand contact to substrate.

The protein belongs to the class I-like SAM-binding methyltransferase superfamily. Cation-independent O-methyltransferase family. COMT subfamily. As to quaternary structure, homodimer. As to expression, highly expressed in capsules. Expressed is stems. Expressed at low levels in roots.

It carries out the reaction (S)-scoulerine + S-adenosyl-L-methionine = (S)-tetrahydrocolumbamine + S-adenosyl-L-homocysteine + H(+). The enzyme catalyses (S)-tetrahydrocolumbamine + S-adenosyl-L-methionine = (S)-tetrahydropalmatine + S-adenosyl-L-homocysteine + H(+). It catalyses the reaction (S)-norreticuline + S-adenosyl-L-methionine = (S)-norcodamine + S-adenosyl-L-homocysteine + H(+). The catalysed reaction is (S)-reticuline + S-adenosyl-L-methionine = (S)-codamine + S-adenosyl-L-homocysteine + H(+). The protein operates within alkaloid biosynthesis. Methyltransferase involved in the biosynthesis of the benzylisoquinoline alkaloid noscapine. Catalyzes the conversion of (S)-scoulerine to (S)-tetrahydrocolumbamine. Can convert (S)-tetrahydrocolumbamine to tetrahydropalmatine. Can convert (S)-norreticuline to (S)-norcodamine. Can convert (S)-reticuline to (S)-codamine. Substrate preference is (S)-scoulerine &gt; (S)-tetrahydrocolumbamine &gt; (S)-norreticuline &gt; (S)-reticuline. This is Scoulerine-9-O-methyltransferase 1 from Papaver somniferum (Opium poppy).